We begin with the raw amino-acid sequence, 607 residues long: Elongation factor 4 (607 aa).

The region spanning 11 to 193 (SKIRNFSIIA…QIVEKVPAPT (183 aa)) is the tr-type G domain. Residues 23–28 (DHGKST) and 140–143 (NKID) contribute to the GTP site.

It belongs to the TRAFAC class translation factor GTPase superfamily. Classic translation factor GTPase family. LepA subfamily.

Its subcellular location is the cell membrane. It catalyses the reaction GTP + H2O = GDP + phosphate + H(+). Functionally, required for accurate and efficient protein synthesis under certain stress conditions. May act as a fidelity factor of the translation reaction, by catalyzing a one-codon backward translocation of tRNAs on improperly translocated ribosomes. Back-translocation proceeds from a post-translocation (POST) complex to a pre-translocation (PRE) complex, thus giving elongation factor G a second chance to translocate the tRNAs correctly. Binds to ribosomes in a GTP-dependent manner. The protein is Elongation factor 4 of Bacillus anthracis (strain CDC 684 / NRRL 3495).